The following is a 495-amino-acid chain: B3 domain-containing protein Os01g0234100 (495 aa).

Disordered stretches follow at residues 1-25 (MAIDQPIKKRGRPPGSKNTKNKMEQ) and 88-108 (PGIPQTCNTQNTSNGRTNTTE). Positions 92–108 (QTCNTQNTSNGRTNTTE) are enriched in polar residues. Positions 152-243 (FVKHMLHSHV…KFKVHIIRDK (92 aa)) form a DNA-binding region, TF-B3. Basic and acidic residues predominate over residues 268 to 282 (EATDNATKPKEDPET). A disordered region spans residues 268 to 289 (EATDNATKPKEDPETTRVSSKV).

Its subcellular location is the nucleus. In Oryza sativa subsp. japonica (Rice), this protein is B3 domain-containing protein Os01g0234100.